Reading from the N-terminus, the 442-residue chain is D-serine dehydratase (442 aa).

Lys-118 is modified (N6-(pyridoxal phosphate)lysine).

Belongs to the serine/threonine dehydratase family. DsdA subfamily. Monomer. Pyridoxal 5'-phosphate serves as cofactor.

The catalysed reaction is D-serine = pyruvate + NH4(+). The sequence is that of D-serine dehydratase from Shigella flexneri serotype 5b (strain 8401).